Reading from the N-terminus, the 155-residue chain is Transcriptional repressor NrdR (155 aa).

The segment at 3–34 is a zinc-finger region; the sequence is CPFCHAEETKVVDSRLVADGAQVRRRRECLEC. Positions 49 to 139 constitute an ATP-cone domain; the sequence is PLIIKRDGRR…VYKRFKDVSD (91 aa).

This sequence belongs to the NrdR family. It depends on Zn(2+) as a cofactor.

Functionally, negatively regulates transcription of bacterial ribonucleotide reductase nrd genes and operons by binding to NrdR-boxes. The protein is Transcriptional repressor NrdR of Legionella pneumophila (strain Lens).